A 303-amino-acid polypeptide reads, in one-letter code: Elongation factor Ts (303 aa).

Residues 80–83 (TDFV) are involved in Mg(2+) ion dislocation from EF-Tu.

The protein belongs to the EF-Ts family.

It localises to the cytoplasm. Associates with the EF-Tu.GDP complex and induces the exchange of GDP to GTP. It remains bound to the aminoacyl-tRNA.EF-Tu.GTP complex up to the GTP hydrolysis stage on the ribosome. This Clostridium botulinum (strain Eklund 17B / Type B) protein is Elongation factor Ts.